Here is a 528-residue protein sequence, read N- to C-terminus: Phosphoenolpyruvate carboxykinase (ATP) (528 aa).

Residues Arg56, Tyr192, and Lys198 each contribute to the substrate site. ATP-binding positions include Lys198, His217, and 233-241 (GLSGTGKTT). Mn(2+)-binding residues include Lys198 and His217. Asp254 serves as a coordination point for Mn(2+). 3 residues coordinate ATP: Glu282, Arg319, and Thr444. Arg319 contacts substrate.

The protein belongs to the phosphoenolpyruvate carboxykinase (ATP) family. Mn(2+) serves as cofactor.

It is found in the cytoplasm. It carries out the reaction oxaloacetate + ATP = phosphoenolpyruvate + ADP + CO2. Its pathway is carbohydrate biosynthesis; gluconeogenesis. Its function is as follows. Involved in the gluconeogenesis. Catalyzes the conversion of oxaloacetate (OAA) to phosphoenolpyruvate (PEP) through direct phosphoryl transfer between the nucleoside triphosphate and OAA. The sequence is that of Phosphoenolpyruvate carboxykinase (ATP) from Bacillus cereus (strain ATCC 10987 / NRS 248).